The sequence spans 234 residues: LexA repressor (234 aa).

The segment at residues 26–46 (FDEMKEALDLASKSGIHRLIT) is a DNA-binding region (H-T-H motif). Residues 73-107 (ATAAAPPKGRGAFRPQVFEGGGAPPPAASPAAAAN) form a disordered region. Residues S155 and K192 each act as for autocatalytic cleavage activity in the active site.

The protein belongs to the peptidase S24 family. Homodimer.

The catalysed reaction is Hydrolysis of Ala-|-Gly bond in repressor LexA.. Its function is as follows. Represses a number of genes involved in the response to DNA damage (SOS response), including recA and lexA. In the presence of single-stranded DNA, RecA interacts with LexA causing an autocatalytic cleavage which disrupts the DNA-binding part of LexA, leading to derepression of the SOS regulon and eventually DNA repair. This Caulobacter vibrioides (strain ATCC 19089 / CIP 103742 / CB 15) (Caulobacter crescentus) protein is LexA repressor.